The chain runs to 96 residues: Toxin ParE1 (96 aa).

The protein belongs to the RelE toxin family. Forms a ParD1(2)-ParE1(2) heterotetramer.

Toxic component of a type II toxin-antitoxin (TA) system. Its toxic effect is neutralized by coexpression with cognate antitoxin ParD1 but no other ParD or RelB antitoxin. Low levels of wild-type toxin in the absence of antitoxin decreases the rate of cell growth, and results in death or loss of colony formation abilities and greatly elongated cells. Low levels of a mutant missing the last 4 residues leads to loss of cell division while cell elongation continues. This chain is Toxin ParE1 (parE1), found in Caulobacter vibrioides (strain ATCC 19089 / CIP 103742 / CB 15) (Caulobacter crescentus).